The chain runs to 380 residues: Glucose-1-phosphate adenylyltransferase (380 aa).

Residues Y100, G165, 180–181, and S191 each bind alpha-D-glucose 1-phosphate; that span reads EK.

The protein belongs to the bacterial/plant glucose-1-phosphate adenylyltransferase family. As to quaternary structure, homotetramer.

The catalysed reaction is alpha-D-glucose 1-phosphate + ATP + H(+) = ADP-alpha-D-glucose + diphosphate. It participates in glycan biosynthesis; glycogen biosynthesis. In terms of biological role, involved in the biosynthesis of ADP-glucose, a building block required for the elongation reactions to produce glycogen. Catalyzes the reaction between ATP and alpha-D-glucose 1-phosphate (G1P) to produce pyrophosphate and ADP-Glc. The polypeptide is Glucose-1-phosphate adenylyltransferase (Clostridium acetobutylicum (strain ATCC 824 / DSM 792 / JCM 1419 / IAM 19013 / LMG 5710 / NBRC 13948 / NRRL B-527 / VKM B-1787 / 2291 / W)).